Here is a 429-residue protein sequence, read N- to C-terminus: Asparagine--tRNA ligase (429 aa).

Belongs to the class-II aminoacyl-tRNA synthetase family. In terms of assembly, homodimer.

It localises to the cytoplasm. The catalysed reaction is tRNA(Asn) + L-asparagine + ATP = L-asparaginyl-tRNA(Asn) + AMP + diphosphate + H(+). This Desulforamulus reducens (strain ATCC BAA-1160 / DSM 100696 / MI-1) (Desulfotomaculum reducens) protein is Asparagine--tRNA ligase.